Here is a 48-residue protein sequence, read N- to C-terminus: Histone H4 (48 aa).

The span at 1-14 (MGGKGGKGGKGLGK) shows a compositional bias: gly residues. Positions 1 to 23 (MGGKGGKGGKGLGKVGAKKRHSR) are disordered.

Belongs to the histone H4 family. The nucleosome is a histone octamer containing two molecules each of H2A, H2B, H3 and H4 assembled in one H3-H4 heterotetramer and two H2A-H2B heterodimers. The octamer wraps approximately 147 bp of DNA.

The protein resides in the nucleus. It localises to the chromosome. Its function is as follows. Core component of nucleosome. Nucleosomes wrap and compact DNA into chromatin, limiting DNA accessibility to the cellular machineries which require DNA as a template. Histones thereby play a central role in transcription regulation, DNA repair, DNA replication and chromosomal stability. DNA accessibility is regulated via a complex set of post-translational modifications of histones, also called histone code, and nucleosome remodeling. This Blepharisma japonicum protein is Histone H4.